The chain runs to 368 residues: Phosphate acyltransferase (368 aa).

Belongs to the PlsX family. In terms of assembly, homodimer. Probably interacts with PlsY.

The protein resides in the cytoplasm. The catalysed reaction is a fatty acyl-[ACP] + phosphate = an acyl phosphate + holo-[ACP]. It participates in lipid metabolism; phospholipid metabolism. In terms of biological role, catalyzes the reversible formation of acyl-phosphate (acyl-PO(4)) from acyl-[acyl-carrier-protein] (acyl-ACP). This enzyme utilizes acyl-ACP as fatty acyl donor, but not acyl-CoA. This is Phosphate acyltransferase from Methylibium petroleiphilum (strain ATCC BAA-1232 / LMG 22953 / PM1).